A 199-amino-acid chain; its full sequence is Early activation antigen CD69 (199 aa).

The tract at residues 1–29 (MSSENCFVAENSSLHPESGQENDATSPHF) is disordered. Residues 1–40 (MSSENCFVAENSSLHPESGQENDATSPHFSTRHEGSFQVP) lie on the Cytoplasmic side of the membrane. A helical; Signal-anchor for type II membrane protein transmembrane segment spans residues 41–61 (VLCAVMNVVFITILIIALIAL). Topologically, residues 62-199 (SVGQYNCPGQ…LYWICNKPYK (138 aa)) are extracellular. Cystine bridges form between C85–C96, C113–C194, and C173–C186. The C-type lectin domain occupies 92-195 (YQRKCYFIST…CEKNLYWICN (104 aa)). N166 carries an N-linked (GlcNAc...) asparagine glycan.

Homodimer; disulfide-linked. Interacts with S100A8 and S100A9. Interacts with galactin-1/LGALS1. Interacts with S1PR1; this interaction mediates S1PR1 degradation. Post-translationally, constitutive Ser/Thr phosphorylation in both mature thymocytes and activated T-lymphocytes. In terms of tissue distribution, expressed on the surface of activated T-cells, B-cells, natural killer cells, neutrophils, eosinophils, epidermal Langerhans cells and platelets.

Its subcellular location is the cell membrane. In terms of biological role, transmembrane protein expressed mainly on T-cells resident in mucosa that plays an essential role in immune cell homeostasis. Rapidly expressed on the surface of platelets, T-lymphocytes and NK cells upon activation by various stimuli, such as antigen recognition or cytokine signaling, stimulates different signaling pathways in different cell types. Negatively regulates Th17 cell differentiation through its carbohydrate dependent interaction with galectin-1/LGALS1 present on immature dendritic cells. Association of CD69 cytoplasmic tail with the JAK3/STAT5 signaling pathway regulates the transcription of RORgamma/RORC and, consequently, differentiation toward the Th17 lineage. Also acts via the S100A8/S100A9 complex present on peripheral blood mononuclear cells to promote the conversion of naive CD4 T-cells into regulatory T-cells. Acts as an oxidized low-density lipoprotein (oxLDL) receptor in CD4 T-lymphocytes and negatively regulates the inflammatory response by inducing the expression of PDCD1 through the activation of NFAT. Participates in adipose tissue-derived mesenchymal stem cells (ASCs)-mediated protection against P.aeruginosa infection. Mechanistically, specifically recognizes P.aeruginosa to promote ERK1 activation, followed by granulocyte-macrophage colony-stimulating factor (GM-CSF) and other inflammatory cytokines secretion. In eosinophils, induces IL-10 production through the ERK1/2 pathway. Negatively regulates the chemotactic responses of effector lymphocytes and dendritic cells (DCs) to sphingosine 1 phosphate/S1P by acting as a S1PR1 receptor agonist and facilitating the internalization and degradation of the receptor. The chain is Early activation antigen CD69 (CD69) from Homo sapiens (Human).